A 207-amino-acid chain; its full sequence is Non-structural protein 5 (207 aa).

The 68-residue stretch at 2 to 69 (DPVSVVHSFA…CVLISNDLKE (68 aa)) folds into the DRBM domain.

This chain is Non-structural protein 5 (Segment-12), found in Banna virus (BAV).